The following is a 217-amino-acid chain: Adenylate kinase (217 aa).

10-15 (GAGKGT) contributes to the ATP binding site. Residues 30-59 (STGDMFRAAMKNETELGLKAKSYMDAGELV) are NMP. AMP contacts are provided by residues T31, R36, 57 to 59 (ELV), 85 to 88 (GFPR), and Q92. The tract at residues 126-163 (GRRVSPTSGRTYHVIFNPPKVEGICDVDGSELIQRDDD) is LID. Residues R127 and 136–137 (TY) contribute to the ATP site. AMP is bound by residues R160 and R171. An ATP-binding site is contributed by Q199.

It belongs to the adenylate kinase family. Monomer.

It localises to the cytoplasm. It carries out the reaction AMP + ATP = 2 ADP. Its pathway is purine metabolism; AMP biosynthesis via salvage pathway; AMP from ADP: step 1/1. In terms of biological role, catalyzes the reversible transfer of the terminal phosphate group between ATP and AMP. Plays an important role in cellular energy homeostasis and in adenine nucleotide metabolism. In Halalkalibacterium halodurans (strain ATCC BAA-125 / DSM 18197 / FERM 7344 / JCM 9153 / C-125) (Bacillus halodurans), this protein is Adenylate kinase.